A 157-amino-acid polypeptide reads, in one-letter code: Small ribosomal subunit protein uS7 (157 aa).

Belongs to the universal ribosomal protein uS7 family. In terms of assembly, part of the 30S ribosomal subunit. Contacts proteins S9 and S11.

One of the primary rRNA binding proteins, it binds directly to 16S rRNA where it nucleates assembly of the head domain of the 30S subunit. Is located at the subunit interface close to the decoding center, probably blocks exit of the E-site tRNA. The polypeptide is Small ribosomal subunit protein uS7 (Marinomonas sp. (strain MWYL1)).